The chain runs to 89 residues: Defensin-like protein 250 (89 aa).

Positions 1–23 (MKLAAIFLVSCVLLSLLPSLTIA) are cleaved as a signal peptide. 4 disulfide bridges follow: cysteine 29/cysteine 86, cysteine 40/cysteine 69, cysteine 48/cysteine 79, and cysteine 67/cysteine 81.

This sequence belongs to the DEFL family.

The protein resides in the secreted. This is Defensin-like protein 250 (SCRL8) from Arabidopsis thaliana (Mouse-ear cress).